Here is a 185-residue protein sequence, read N- to C-terminus: FK506-binding protein 2 (185 aa).

The signal sequence occupies residues 1 to 20 (MQGLLLSLSLLASAAVGVLA). Residues 41 to 129 (GDKINVHYKG…VFETELVGIE (89 aa)) form the PPIase FKBP-type domain. The Prevents secretion from ER signature appears at 182–185 (HNEL).

It belongs to the FKBP-type PPIase family. FKBP2 subfamily.

The protein localises to the endoplasmic reticulum. The catalysed reaction is [protein]-peptidylproline (omega=180) = [protein]-peptidylproline (omega=0). Inhibited by both FK506 and rapamycin. Functionally, PPIases accelerate the folding of proteins. It catalyzes the cis-trans isomerization of proline imidic peptide bonds in oligopeptides. The sequence is that of FK506-binding protein 2 (FPR2) from Podospora anserina (Pleurage anserina).